The following is an 88-amino-acid chain: UPF0250 protein Ssed_3490 (88 aa).

It belongs to the UPF0250 family.

In Shewanella sediminis (strain HAW-EB3), this protein is UPF0250 protein Ssed_3490.